A 113-amino-acid chain; its full sequence is UPF0342 protein SMU_782 (113 aa).

Belongs to the UPF0342 family.

This chain is UPF0342 protein SMU_782, found in Streptococcus mutans serotype c (strain ATCC 700610 / UA159).